A 734-amino-acid polypeptide reads, in one-letter code: MDTPISASNQTATVVKPQQPRRVLACVLCQQRKIKCDRTFPCTNCVRAHVQCEQATRQRRRRFPEKELLTRLRLYESLLQQHNIKFDPLHTPTADHRSASDDGRDDLPEGAESEGTFGEREKPAVKTKSLYEFGSCINSLISGRLILVNRGDDDGNNGEDDEHDTGFLHDTDDVRPAVIQKAWNHTFQGQNNDHLLFGSPVGTVNLSASHPSHVHIFRLWQVYLDNVNPLLKVTHTPTLQTRIIDAASDITNISPTLEALMFSIYCVSLLSLSDEQCRALFGSAKKELSTGYQFACQQALRSCSILRSSDRESLTALYLYLVSIRPDTDPASLSSLLSVAIRIAQRIGIHNESTYGKCSALETEMRHRLWWSLIIFDNRICEMSDDKTASLAPTWDCKVPLNVNDFELQPEMKTPPAPNNRPTEMLFAVVRSELADFVRHSAFHLNFTNPSLNTIATRLTDETAQLVSLERALEEKYLAFCNPENALHFMTLWTMRGSLAKSRLLQHYSQCSNTSVPPTDAQRNTGIAHALRMLECDTELMTSPLTQGYRWLVHFHFPFPAYIHLLQDLKKRPVEAHADRAWEAMSDNYAVRMMDASQDDRPFFIVFSRIVLQAWEAREKMAVAAQLETPPPVPPRMVVDIRDKVMQMTASFGMDAAAAVESGGVVGVKAGDLDMPMQMDFAAPEMAYGAGGHGATGLEPWGCLDMAGPAAGDVGANQFLLNTMEWNALHARDR.

The segment at residues 26–52 is a DNA-binding region (zn(2)-C6 fungal-type); the sequence is CVLCQQRKIKCDRTFPCTNCVRAHVQC. Residues 86-107 are compositionally biased toward basic and acidic residues; it reads FDPLHTPTADHRSASDDGRDDL. The segment at 86–122 is disordered; it reads FDPLHTPTADHRSASDDGRDDLPEGAESEGTFGEREK.

The protein localises to the nucleus. Functionally, transcriptional regulator; part of the gene cluster that mediates the biosynthesis of the tetrahydroxanthone dimer secalonic acid D. The polypeptide is Transcriptional regulator AacuB (Aspergillus aculeatus (strain ATCC 16872 / CBS 172.66 / WB 5094)).